The chain runs to 148 residues: Puroindoline-B (148 aa).

The first 19 residues, 1–19 (MKTLFLLALLALVASTTFA), serve as a signal peptide directing secretion. Positions 20–29 (QYSEVGGWYN) are excised as a propeptide.

Five disulfide bonds are present. Endosperm and aleurone layer of developing kernels. In the aleurone layer, mainly localized to starch granules and the surface of the plasma membrane, forming a uniform layer, also abundant in the intercellular space. In the endosperm, mainly localized to starch granules and the plasma membrane, but less abundant in the intercellular space. Not found in roots or coleoptiles.

It localises to the membrane. Its subcellular location is the secreted. The protein resides in the extracellular space. Acts as a membranotoxin, probably through its antibacterial and antifungal activities, contributing to the defense mechanism of the plant against predators. Forms monovalent cation-selective ion channels in membranes. Has antibacterial activity against the Gram-positive bacteria S.aureus and C.michiganensis, and the Gram-negative bacteria E.coli, P.syringae pv phaseoli, A.tumefaciens and E.carotovora subsp carotovora. Acts synergistically with PINA against bacteria. Contributes to grain texture and hardness. The polypeptide is Puroindoline-B (PINB) (Triticum aestivum (Wheat)).